Here is a 103-residue protein sequence, read N- to C-terminus: Large ribosomal subunit protein uL23 (103 aa).

It belongs to the universal ribosomal protein uL23 family. In terms of assembly, part of the 50S ribosomal subunit. Contacts protein L29, and trigger factor when it is bound to the ribosome.

One of the early assembly proteins it binds 23S rRNA. One of the proteins that surrounds the polypeptide exit tunnel on the outside of the ribosome. Forms the main docking site for trigger factor binding to the ribosome. This chain is Large ribosomal subunit protein uL23, found in Prochlorococcus marinus (strain NATL1A).